Here is a 400-residue protein sequence, read N- to C-terminus: Deoxyguanosinetriphosphate triphosphohydrolase-like protein (400 aa).

Residues 76–204 (RLTHTLEVAQ…VNIADPLAYC (129 aa)) form the HD domain.

The protein belongs to the dGTPase family. Type 2 subfamily.

The sequence is that of Deoxyguanosinetriphosphate triphosphohydrolase-like protein from Syntrophus aciditrophicus (strain SB).